The primary structure comprises 188 residues: MEIKLFNKWDTTEIVVKDPSLRHYINLEPIFVPHTSGRNSGRMFEKAKMNIVERLVNNLMRAEQNTGQKQVTLSIVEEAFEIIEKRTNENPVKVLVEALENGGPREETTRISYGGIAFLQSVDVSPSRRLDTALRNIAIGTLNSAHKNKKSAAQCLADEIMFASKADMQRSFAVRKKEEKERVAQSAR.

Belongs to the universal ribosomal protein uS7 family. As to quaternary structure, part of the 30S ribosomal subunit.

Functionally, one of the primary rRNA binding proteins, it binds directly to 16S rRNA where it nucleates assembly of the head domain of the 30S subunit. Is located at the subunit interface close to the decoding center. The sequence is that of Small ribosomal subunit protein uS7 from Methanococcus aeolicus (strain ATCC BAA-1280 / DSM 17508 / OCM 812 / Nankai-3).